Here is a 116-residue protein sequence, read N- to C-terminus: MNNIIKMLNDEQMKQDVPEFGAGDTVVVKVRVVEGGKERLQAFEGVVIAKRNRGLHSAFTVRKISNGEGVERAFQTHSPLISSIEVKRRGRVRRAKLYYLRERSGKSARIREKLAK.

This sequence belongs to the bacterial ribosomal protein bL19 family.

This protein is located at the 30S-50S ribosomal subunit interface and may play a role in the structure and function of the aminoacyl-tRNA binding site. The sequence is that of Large ribosomal subunit protein bL19 from Shewanella loihica (strain ATCC BAA-1088 / PV-4).